Here is a 392-residue protein sequence, read N- to C-terminus: Selenide, water dikinase 1 (392 aa).

C31 is an active-site residue. ATP is bound by residues K32, 67-69, D87, D110, and 161-164; these read GMD and GGQT. D69 lines the Mg(2+) pocket. D110 serves as a coordination point for Mg(2+). A Mg(2+)-binding site is contributed by D265.

Belongs to the selenophosphate synthase 1 family. Class II subfamily. As to quaternary structure, homodimer. Mg(2+) serves as cofactor.

Its subcellular location is the cell membrane. It is found in the nucleus membrane. The catalysed reaction is hydrogenselenide + ATP + H2O = selenophosphate + AMP + phosphate + 2 H(+). Synthesizes selenophosphate from selenide and ATP. The protein is Selenide, water dikinase 1 (sephs1) of Xenopus tropicalis (Western clawed frog).